The chain runs to 171 residues: Superoxide dismutase [Cu-Zn] 2 (171 aa).

The first 20 residues, 1–20 (MKKLSGVLAGSLLLISASFS), serve as a signal peptide directing secretion. Cu cation contacts are provided by histidine 67, histidine 69, and histidine 85. Cysteine 74 and cysteine 167 form a disulfide bridge. The Zn(2+) site is built by histidine 85, histidine 93, histidine 102, and aspartate 105. Histidine 147 lines the Cu cation pocket.

Belongs to the Cu-Zn superoxide dismutase family. It depends on Cu cation as a cofactor. Zn(2+) serves as cofactor.

The catalysed reaction is 2 superoxide + 2 H(+) = H2O2 + O2. Its function is as follows. Destroys radicals which are normally produced within the cells and which are toxic to biological systems. This Aquifex aeolicus (strain VF5) protein is Superoxide dismutase [Cu-Zn] 2 (sodC2).